Here is a 158-residue protein sequence, read N- to C-terminus: Succinate dehydrogenase [ubiquinone] cytochrome b small subunit, mitochondrial (158 aa).

The N-terminal 55 residues, 1-55 (MALWRLSVLCGAREGRALFLRTPVVRPALVSAFLQDRPAQGWCGTQHIHLSPSHH), are a transit peptide targeting the mitochondrion. Residues 56–62 (SGSKAAS) lie on the Mitochondrial matrix side of the membrane. Residues 63-84 (LHWTGERVVSVLLLGLIPAAYL) traverse the membrane as a helical segment. Residues 85–89 (NPCSA) are Mitochondrial intermembrane-facing. The chain crosses the membrane as a helical span at residues 90-110 (MDYSLAATLTLHSHWGIGQVV). Heme b is bound at residue His101. Topologically, residues 111-119 (TDYVHGDAV) are mitochondrial matrix. Residue Tyr113 participates in a ubiquinone binding. A helical membrane pass occupies residues 120–141 (QKAAKTGLLVLSAFTFAGLCYF). Residues 142–158 (NYHDVGICKAVAMLWKL) are Mitochondrial intermembrane-facing.

This sequence belongs to the CybS family. As to quaternary structure, component of complex II composed of four subunits: the flavoprotein (FP) SDHA, iron-sulfur protein (IP) SDHB, and a cytochrome b560 composed of SDHC and SDHD.

The protein resides in the mitochondrion inner membrane. The protein operates within carbohydrate metabolism; tricarboxylic acid cycle. In terms of biological role, membrane-anchoring subunit of succinate dehydrogenase (SDH) that is involved in complex II of the mitochondrial electron transport chain and is responsible for transferring electrons from succinate to ubiquinone (coenzyme Q). SDH also oxidizes malate to the non-canonical enol form of oxaloacetate, enol-oxaloacetate. Enol-oxaloacetate, which is a potent inhibitor of the succinate dehydrogenase activity, is further isomerized into keto-oxaloacetate. The sequence is that of Succinate dehydrogenase [ubiquinone] cytochrome b small subunit, mitochondrial (SDHD) from Bos taurus (Bovine).